The primary structure comprises 87 residues: Small ribosomal subunit protein bS20 (87 aa).

The disordered stretch occupies residues methionine 1–lysine 22.

The protein belongs to the bacterial ribosomal protein bS20 family.

Binds directly to 16S ribosomal RNA. In Clavibacter michiganensis subsp. michiganensis (strain NCPPB 382), this protein is Small ribosomal subunit protein bS20.